The primary structure comprises 897 residues: Alpha-actinin-2 (897 aa).

An actin-binding region spans residues M1–H257. 2 consecutive Calponin-homology (CH) domains span residues K41–A145 and T154–A260. Spectrin repeat units lie at residues R284 to N394, H404 to R509, Q519 to E630, and R640 to T743. EF-hand domains lie at E756–D791 and L792–D827. Residues D769, N773, D780, D805, N807, and T811 each coordinate Ca(2+).

It belongs to the alpha-actinin family. Homodimer; antiparallel. Ubiquitinated by FBXL22, leading to proteasomal degradation.

It localises to the cytoplasm. The protein localises to the myofibril. It is found in the sarcomere. The protein resides in the z line. In terms of biological role, F-actin cross-linking protein which is thought to anchor actin to a variety of intracellular structures. This is a bundling protein. This chain is Alpha-actinin-2 (ACTN2), found in Gallus gallus (Chicken).